The chain runs to 141 residues: Large ribosomal subunit protein uL11 (141 aa).

It belongs to the universal ribosomal protein uL11 family. Part of the ribosomal stalk of the 50S ribosomal subunit. Interacts with L10 and the large rRNA to form the base of the stalk. L10 forms an elongated spine to which L12 dimers bind in a sequential fashion forming a multimeric L10(L12)X complex. Post-translationally, one or more lysine residues are methylated.

Forms part of the ribosomal stalk which helps the ribosome interact with GTP-bound translation factors. The polypeptide is Large ribosomal subunit protein uL11 (Natranaerobius thermophilus (strain ATCC BAA-1301 / DSM 18059 / JW/NM-WN-LF)).